The following is a 448-amino-acid chain: 5-hydroxytryptamine receptor 7 (448 aa).

At 1–86 (MMDVNSSGRP…INYGRVEKVV (86 aa)) the chain is on the extracellular side. N-linked (GlcNAc...) asparagine glycosylation is found at asparagine 5 and asparagine 69. Residues 87 to 111 (IGSILTLITLLTIAGNCLVVISVCF) traverse the membrane as a helical segment. Over 112-121 (VKKLRQPSNY) the chain is Cytoplasmic. The helical transmembrane segment at 122–143 (LIVSLALADLSVAVAVMPFVSV) threads the bilayer. The Extracellular portion of the chain corresponds to 144–155 (TDLIGGKWIFGH). The chain crosses the membrane as a helical span at residues 156 to 181 (FFCNVFIAMDVMCCTASIMTLCVISI). A disulfide bridge links cysteine 158 with cysteine 234. A serotonin-binding site is contributed by aspartate 165. Residues 182–201 (DRYLGITRPLTYPVRQNGKC) lie on the Cytoplasmic side of the membrane. The chain crosses the membrane as a helical span at residues 202-222 (MAKMILSVWLLSASITLPPLF). At 223 to 240 (GWAQNVNDDKVCLISQDF) the chain is on the extracellular side. A helical membrane pass occupies residues 241–263 (GYTIYSTAVAFYIPMSVMLFMYY). Topologically, residues 264–329 (QIYKAARKSA…SIFKREQKAA (66 aa)) are cytoplasmic. Residues 330 to 355 (TTLGIIVGAFTVCWLPFFLLSTARPF) form a helical membrane-spanning segment. The Extracellular portion of the chain corresponds to 356–366 (ICGTSCSCIPL). A helical transmembrane segment spans residues 367–390 (WVERTCLWLGYANSLINPFIYAFF). Residues 391–448 (NRDLRTTYRSLLQCQYRNINRKLSAAGMHEALKLAERPERSEFVLQNSDHCGKKGHDT) lie on the Cytoplasmic side of the membrane. Cysteine 404 carries S-palmitoyl cysteine lipidation.

This sequence belongs to the G-protein coupled receptor 1 family. Thalamus, hypothalamus, and the hippocampal rudiments.

It is found in the cell membrane. In terms of biological role, G-protein coupled receptor for 5-hydroxytryptamine (serotonin), a biogenic hormone that functions as a neurotransmitter, a hormone and a mitogen. Ligand binding causes a conformation change that triggers signaling via guanine nucleotide-binding proteins (G proteins) and modulates the activity of downstream effectors. HTR7 is coupled to G(s) G alpha proteins and mediates activation of adenylate cyclase activity. The protein is 5-hydroxytryptamine receptor 7 of Rattus norvegicus (Rat).